A 343-amino-acid chain; its full sequence is Methionine import ATP-binding protein MetN 1 (343 aa).

Residues 2–241 (IKLTHISKVF…PKTPLAQQFI (240 aa)) form the ABC transporter domain. 38–45 (GASGAGKS) is a binding site for ATP.

It belongs to the ABC transporter superfamily. Methionine importer (TC 3.A.1.24) family. The complex is composed of two ATP-binding proteins (MetN), two transmembrane proteins (MetI) and a solute-binding protein (MetQ).

It is found in the cell inner membrane. It carries out the reaction L-methionine(out) + ATP + H2O = L-methionine(in) + ADP + phosphate + H(+). The enzyme catalyses D-methionine(out) + ATP + H2O = D-methionine(in) + ADP + phosphate + H(+). Functionally, part of the ABC transporter complex MetNIQ involved in methionine import. Responsible for energy coupling to the transport system. The polypeptide is Methionine import ATP-binding protein MetN 1 (Yersinia pestis bv. Antiqua (strain Antiqua)).